The primary structure comprises 677 residues: L-type lectin-domain containing receptor kinase IV.2 (677 aa).

Positions 1–22 are cleaved as a signal peptide; sequence MFVKLKLIFFFFLLCQIMISSS. Topologically, residues 23–291 are extracellular; it reads QNLNFTYNGF…EPRRISEFYK (269 aa). A legume-lectin like region spans residues 24 to 262; that stretch reads NLNFTYNGFH…EHFLVGWSFR (239 aa). N-linked (GlcNAc...) asparagine glycans are attached at residues asparagine 26, asparagine 57, asparagine 81, asparagine 128, asparagine 134, asparagine 171, asparagine 186, and asparagine 203. The chain crosses the membrane as a helical span at residues 292–312; the sequence is IGMPLISLSLIFSIIFLAFYI. Residues 313 to 677 are Cytoplasmic-facing; that stretch reads VRRKKKYEEE…IADSLLSGGR (365 aa). The Protein kinase domain maps to 347 to 625; the sequence is FKEKDLLGSG…LQYLRGDMAL (279 aa). ATP-binding positions include 353 to 361 and lysine 376; that span reads LGSGGFGRV. Aspartate 472 acts as the Proton acceptor in catalysis.

This sequence in the C-terminal section; belongs to the protein kinase superfamily. Ser/Thr protein kinase family. In the N-terminal section; belongs to the leguminous lectin family.

The protein localises to the cell membrane. The enzyme catalyses L-seryl-[protein] + ATP = O-phospho-L-seryl-[protein] + ADP + H(+). It catalyses the reaction L-threonyl-[protein] + ATP = O-phospho-L-threonyl-[protein] + ADP + H(+). In terms of biological role, required during pollen development. Its function is as follows. Involved in resistance response to the pathogenic bacteria Pseudomonas syringae. This chain is L-type lectin-domain containing receptor kinase IV.2, found in Arabidopsis thaliana (Mouse-ear cress).